Consider the following 353-residue polypeptide: N6-methyladenosine RNA demethylase ALKB1 (353 aa).

The Fe2OG dioxygenase domain occupies 223–352; sequence IAQAAIVNFY…RINLNVRQMR (130 aa). Fe cation contacts are provided by histidine 241, aspartate 243, and histidine 308. 2-oxoglutarate is bound at residue arginine 343.

Belongs to the alkB family. Fe(2+) is required as a cofactor.

The protein localises to the cytoplasm. It localises to the P-body. It catalyses the reaction an N(6)-methyladenosine in mRNA + 2-oxoglutarate + O2 = an adenosine in mRNA + formaldehyde + succinate + CO2. Functionally, RNA demethylase that regulates the stability of mRNAs through an m(6)A-dependent manner. M6A is a modification present at internal sites of mRNAs and some non-coding RNAs and plays a role in mRNA stability and processing. Plays a role in pathogenicity towards plant host. The chain is N6-methyladenosine RNA demethylase ALKB1 from Pyricularia oryzae (strain 70-15 / ATCC MYA-4617 / FGSC 8958) (Rice blast fungus).